The primary structure comprises 271 residues: MLLAIDVRNTHTVVGLISGSGDHAKVEQHWRIRTEPEVTADELALTIDGLIGDDAERLTGAAGLSTVPSVLHEVRVMLDQYWPSVPHVLIEPGVRTGIPLLVDNPKEVGADRIVNCLAAYHKFGTASIVVDFGSSICVDVVSAKGEFLGGAIAPGVQVSSDAAAERSAALRRVELTRPRSVVGKNTVECMQAGAVFGFAGLVDGLVSRVRDDVDGFGGGDVNVVATGHGAPLVLADLRTVEHYDRHLTLDGLRLVFERNRDSQRGKLKQAR.

Residue 6-13 coordinates ATP; it reads DVRNTHTV. Residue 109–112 participates in substrate binding; that stretch reads GADR. Asp-111 (proton acceptor) is an active-site residue. Asp-131 lines the K(+) pocket. Ser-134 contacts ATP. Thr-186 contacts substrate.

Belongs to the type III pantothenate kinase family. As to quaternary structure, homodimer. NH4(+) is required as a cofactor. K(+) serves as cofactor.

Its subcellular location is the cytoplasm. The enzyme catalyses (R)-pantothenate + ATP = (R)-4'-phosphopantothenate + ADP + H(+). The protein operates within cofactor biosynthesis; coenzyme A biosynthesis; CoA from (R)-pantothenate: step 1/5. In terms of biological role, catalyzes the phosphorylation of pantothenate (Pan), the first step in CoA biosynthesis. In Mycolicibacterium vanbaalenii (strain DSM 7251 / JCM 13017 / BCRC 16820 / KCTC 9966 / NRRL B-24157 / PYR-1) (Mycobacterium vanbaalenii), this protein is Type III pantothenate kinase.